A 535-amino-acid polypeptide reads, in one-letter code: Inositol 1,4,5-trisphosphate receptor-interacting protein-like 2 (535 aa).

A signal peptide spans Met1–Ala38. Residues Glu39 to Gly43 lie on the Extracellular side of the membrane. The chain crosses the membrane as a helical span at residues Val44 to Leu64. Residues Arg65–Pro535 lie on the Cytoplasmic side of the membrane. Phosphoserine is present on Ser139.

The protein belongs to the ITPRIP family.

The protein resides in the membrane. The protein is Inositol 1,4,5-trisphosphate receptor-interacting protein-like 2 (ITPRIPL2) of Homo sapiens (Human).